We begin with the raw amino-acid sequence, 210 residues long: NEDD4 family-interacting protein 1-like (210 aa).

Residues 1–31 (MAEPSGRYQQLPCEEEPEAGPQVAADAPPPY) form a disordered region. The Cytoplasmic segment spans residues 1–105 (MAEPSGRYQQ…ADQLRIGNDG (105 aa)). 2 short sequence motifs (PPxY motif) span residues 30–33 (PYSS) and 53–56 (PPSY). Residues 106–126 (IFMLTFFMAFLFNWIGFFLSF) form a helical membrane-spanning segment. Over 127–132 (CLTTSA) the chain is Extracellular. The helical transmembrane segment at 133–153 (AGRYGAISGFGLSLIKWILIV) threads the bilayer. The Cytoplasmic portion of the chain corresponds to 154 to 161 (RFSTYFPG). Residues 162 to 182 (YFDGQYWLWWVFLVLGFLLFL) form a helical membrane-spanning segment. At 183–210 (RGFINYAKIRKMADSFSTLPRTRVLFIY) the chain is on the extracellular side.

It is found in the golgi apparatus membrane. May play a role in Golgi structure maintenance. This chain is NEDD4 family-interacting protein 1-like (ndfip1l), found in Danio rerio (Zebrafish).